Reading from the N-terminus, the 230-residue chain is uncharacterized protein (230 aa).

Residues 19–39 (GIFQVLLQLVLAMMTVWDFAG) form a helical membrane-spanning segment. The N-linked (GlcNAc...) asparagine; by host glycan is linked to asparagine 41. The chain crosses the membrane as a helical span at residues 55 to 75 (SFLLVLYTGLKQILEYMFSIC). Asparagine 86, asparagine 157, asparagine 168, and asparagine 182 each carry an N-linked (GlcNAc...) asparagine; by host glycan. Positions 172–196 (TNLHKYQNDENDTEEDSEDIEKNSD) form a coiled coil. A disordered region spans residues 178-205 (QNDENDTEEDSEDIEKNSDPKENSDIDS). Residues 180–190 (DENDTEEDSED) are compositionally biased toward acidic residues. The segment covering 191–201 (IEKNSDPKENS) has biased composition (basic and acidic residues).

It localises to the membrane. This is an uncharacterized protein from Acanthamoeba polyphaga mimivirus (APMV).